The sequence spans 953 residues: Translation initiation factor IF-2 (953 aa).

Disordered stretches follow at residues Ser48–Glu240 and Thr279–Lys363. Composition is skewed to basic and acidic residues over residues Thr80 to Gln89, Phe98 to Ala111, and Gln140 to Lys188. Residues Arg191 to Ser207 are compositionally biased toward polar residues. A compositionally biased stretch (basic and acidic residues) spans Arg229 to Glu240. Positions Lys282–Thr291 are enriched in polar residues. A compositionally biased stretch (basic and acidic residues) spans Ala300–Lys317. Residues Ser322–Asn338 are compositionally biased toward low complexity. Over residues Lys339–Asn348 the composition is skewed to basic residues. Residues Glu454 to Lys623 enclose the tr-type G domain. The interval Gly463 to Thr470 is G1. Position 463 to 470 (Gly463 to Thr470) interacts with GTP. A G2 region spans residues Gly488–His492. The G3 stretch occupies residues Asp509 to Gly512. Residues Asp509–His513 and Asn563–Asp566 contribute to the GTP site. The interval Asn563 to Asp566 is G4. The tract at residues Ser599 to Lys601 is G5.

This sequence belongs to the TRAFAC class translation factor GTPase superfamily. Classic translation factor GTPase family. IF-2 subfamily.

Its subcellular location is the cytoplasm. In terms of biological role, one of the essential components for the initiation of protein synthesis. Protects formylmethionyl-tRNA from spontaneous hydrolysis and promotes its binding to the 30S ribosomal subunits. Also involved in the hydrolysis of GTP during the formation of the 70S ribosomal complex. This Streptococcus pyogenes serotype M1 protein is Translation initiation factor IF-2.